The primary structure comprises 694 residues: Inactive protein-arginine deiminase type-6 (694 aa).

2 positions are modified to phosphoserine: serine 10 and serine 446.

It belongs to the protein arginine deiminase family. In terms of assembly, homodimers. Associates with alpha-tubulin. In terms of processing, phosphorylation at Ser-10, possibly by RSK-type kinases, and Ser-446 creates binding sites for 14-3-3 proteins. As to expression, highly expressed in oocytes and weakly expressed in other somatic tissues.

The protein resides in the cytoplasm. Its subcellular location is the cytoplasmic vesicle. It localises to the secretory vesicle. The protein localises to the cortical granule. It is found in the nucleus. Structural constituent of cytoplasmic lattices, which plays a key role in early embryonic development. Cytoplasmic lattices consist in fibrous structures found in the cytoplasm of oocytes and preimplantation embryos. They are required to store maternal proteins critical for embryonic development, such as ribosomal proteins and proteins that control epigenetic reprogramming of the preimplantation embryo, and prevent their degradation or activation. In contrast to other members of the family, does not show protein-arginine deiminase activity due to its inability to bind Ca(2+). This chain is Inactive protein-arginine deiminase type-6, found in Homo sapiens (Human).